Consider the following 433-residue polypeptide: Tol-Pal system protein TolB (433 aa).

An N-terminal signal peptide occupies residues 1–21 (MRNLLRGMLVVICCMAGIAAA).

The protein belongs to the TolB family. In terms of assembly, the Tol-Pal system is composed of five core proteins: the inner membrane proteins TolA, TolQ and TolR, the periplasmic protein TolB and the outer membrane protein Pal. They form a network linking the inner and outer membranes and the peptidoglycan layer.

It localises to the periplasm. Part of the Tol-Pal system, which plays a role in outer membrane invagination during cell division and is important for maintaining outer membrane integrity. The sequence is that of Tol-Pal system protein TolB from Pseudomonas fluorescens (strain SBW25).